A 1179-amino-acid polypeptide reads, in one-letter code: ATP-dependent helicase/deoxyribonuclease subunit B (1179 aa).

The protein belongs to the helicase family. AddB/RexB type 2 subfamily. Heterodimer of AddA and RexB. It depends on Mg(2+) as a cofactor.

Functionally, the heterodimer acts as both an ATP-dependent DNA helicase and an ATP-dependent, dual-direction single-stranded exonuclease. Recognizes the chi site generating a DNA molecule suitable for the initiation of homologous recombination. This subunit has 5' -&gt; 3' nuclease activity but not helicase activity. The protein is ATP-dependent helicase/deoxyribonuclease subunit B of Lactobacillus delbrueckii subsp. bulgaricus (strain ATCC BAA-365 / Lb-18).